Here is a 417-residue protein sequence, read N- to C-terminus: Actin-like protein 7B (417 aa).

Residues 1 to 39 (MATKNNPSPKPMGTAQGDPGEAGTLPAPEAGIRDTGSTQ) form a disordered region. S8 is subject to Phosphoserine.

This sequence belongs to the actin family.

The protein resides in the cytoplasm. It localises to the cytoskeleton. The sequence is that of Actin-like protein 7B (Actl7b) from Rattus norvegicus (Rat).